A 286-amino-acid polypeptide reads, in one-letter code: 4-diphosphocytidyl-2-C-methyl-D-erythritol kinase (286 aa).

The active site involves Lys11. 94–104 is a binding site for ATP; the sequence is PMGGGIGGGSS. Residue Asp136 is part of the active site.

The protein belongs to the GHMP kinase family. IspE subfamily.

It carries out the reaction 4-CDP-2-C-methyl-D-erythritol + ATP = 4-CDP-2-C-methyl-D-erythritol 2-phosphate + ADP + H(+). Its pathway is isoprenoid biosynthesis; isopentenyl diphosphate biosynthesis via DXP pathway; isopentenyl diphosphate from 1-deoxy-D-xylulose 5-phosphate: step 3/6. Its function is as follows. Catalyzes the phosphorylation of the position 2 hydroxy group of 4-diphosphocytidyl-2C-methyl-D-erythritol. The chain is 4-diphosphocytidyl-2-C-methyl-D-erythritol kinase from Pseudomonas putida (strain W619).